Reading from the N-terminus, the 229-residue chain is Flagellar L-ring protein 1 (229 aa).

The first 18 residues, 1–18 (MYLRKISAPLMTMLLLNG), serve as a signal peptide directing secretion. Cys19 carries N-palmitoyl cysteine lipidation. Cys19 is lipidated: S-diacylglycerol cysteine.

Belongs to the FlgH family. The basal body constitutes a major portion of the flagellar organelle and consists of four rings (L,P,S, and M) mounted on a central rod.

It is found in the cell outer membrane. The protein localises to the bacterial flagellum basal body. In terms of biological role, assembles around the rod to form the L-ring and probably protects the motor/basal body from shearing forces during rotation. This Yersinia pseudotuberculosis serotype I (strain IP32953) protein is Flagellar L-ring protein 1 (flgH1).